The chain runs to 329 residues: Probable cell division protein WhiA (329 aa).

Positions Ser276–Arg309 form a DNA-binding region, H-T-H motif. The disordered stretch occupies residues Ala308 to Gly329. Residues Arg309–Glu318 are compositionally biased toward polar residues.

The protein belongs to the WhiA family.

Its function is as follows. Involved in cell division and chromosome segregation. The polypeptide is Probable cell division protein WhiA (Cutibacterium acnes (strain DSM 16379 / KPA171202) (Propionibacterium acnes)).